The chain runs to 191 residues: Orotate phosphoribosyltransferase (191 aa).

114-122 (EDVVTTGKS) contacts 5-phospho-alpha-D-ribose 1-diphosphate. The orotate site is built by Thr118 and Arg146.

Belongs to the purine/pyrimidine phosphoribosyltransferase family. PyrE subfamily. In terms of assembly, homodimer. The cofactor is Mg(2+).

It carries out the reaction orotidine 5'-phosphate + diphosphate = orotate + 5-phospho-alpha-D-ribose 1-diphosphate. It functions in the pathway pyrimidine metabolism; UMP biosynthesis via de novo pathway; UMP from orotate: step 1/2. In terms of biological role, catalyzes the transfer of a ribosyl phosphate group from 5-phosphoribose 1-diphosphate to orotate, leading to the formation of orotidine monophosphate (OMP). In Clostridium botulinum (strain ATCC 19397 / Type A), this protein is Orotate phosphoribosyltransferase.